The primary structure comprises 214 residues: Urease accessory protein UreF (214 aa).

This sequence belongs to the UreF family. UreD, UreF and UreG form a complex that acts as a GTP-hydrolysis-dependent molecular chaperone, activating the urease apoprotein by helping to assemble the nickel containing metallocenter of UreC. The UreE protein probably delivers the nickel.

It localises to the cytoplasm. Functionally, required for maturation of urease via the functional incorporation of the urease nickel metallocenter. This chain is Urease accessory protein UreF, found in Ruegeria sp. (strain TM1040) (Silicibacter sp.).